A 281-amino-acid polypeptide reads, in one-letter code: Probable endonuclease 4 (281 aa).

Residues His-67, His-107, Glu-142, Asp-176, His-179, His-211, Asp-224, His-226, and Glu-256 each contribute to the Zn(2+) site.

The protein belongs to the AP endonuclease 2 family. Zn(2+) serves as cofactor.

It catalyses the reaction Endonucleolytic cleavage to 5'-phosphooligonucleotide end-products.. In terms of biological role, endonuclease IV plays a role in DNA repair. It cleaves phosphodiester bonds at apurinic or apyrimidinic (AP) sites, generating a 3'-hydroxyl group and a 5'-terminal sugar phosphate. This is Probable endonuclease 4 from Alkaliphilus oremlandii (strain OhILAs) (Clostridium oremlandii (strain OhILAs)).